The chain runs to 143 residues: Large ribosomal subunit protein uL13 (143 aa).

This sequence belongs to the universal ribosomal protein uL13 family. In terms of assembly, part of the 50S ribosomal subunit.

In terms of biological role, this protein is one of the early assembly proteins of the 50S ribosomal subunit, although it is not seen to bind rRNA by itself. It is important during the early stages of 50S assembly. The sequence is that of Large ribosomal subunit protein uL13 from Prochlorococcus marinus (strain MIT 9312).